A 459-amino-acid polypeptide reads, in one-letter code: Putrescine aminotransferase (459 aa).

Pyridoxal 5'-phosphate contacts are provided by residues 150 to 151 (GT) and glutamine 274. An N6-(pyridoxal phosphate)lysine modification is found at lysine 300. Threonine 332 contacts pyridoxal 5'-phosphate.

Belongs to the class-III pyridoxal-phosphate-dependent aminotransferase family. Putrescine aminotransferase subfamily. The cofactor is pyridoxal 5'-phosphate.

It catalyses the reaction an alkane-alpha,omega-diamine + 2-oxoglutarate = an omega-aminoaldehyde + L-glutamate. The enzyme catalyses putrescine + 2-oxoglutarate = 1-pyrroline + L-glutamate + H2O. It carries out the reaction cadaverine + 2-oxoglutarate = 5-aminopentanal + L-glutamate. Its pathway is amine and polyamine degradation; putrescine degradation; 4-aminobutanal from putrescine (transaminase route): step 1/1. Functionally, catalyzes the aminotransferase reaction from putrescine to 2-oxoglutarate, leading to glutamate and 4-aminobutanal, which spontaneously cyclizes to form 1-pyrroline. This is the first step in one of two pathways for putrescine degradation, where putrescine is converted into 4-aminobutanoate (gamma-aminobutyrate or GABA) via 4-aminobutanal. Also functions as a cadaverine transaminase in a a L-lysine degradation pathway to succinate that proceeds via cadaverine, glutarate and L-2-hydroxyglutarate. The chain is Putrescine aminotransferase from Escherichia coli O17:K52:H18 (strain UMN026 / ExPEC).